The following is a 104-amino-acid chain: UPF0145 protein TM1040_1243 (104 aa).

The protein belongs to the UPF0145 family.

This is UPF0145 protein TM1040_1243 from Ruegeria sp. (strain TM1040) (Silicibacter sp.).